Consider the following 358-residue polypeptide: D-xylulose reductase A (358 aa).

Zn(2+)-binding residues include Cys47, His72, and Glu73. 182–187 serves as a coordination point for NAD(+); that stretch reads GAGPVG.

This sequence belongs to the zinc-containing alcohol dehydrogenase family. It depends on Zn(2+) as a cofactor.

It carries out the reaction xylitol + NAD(+) = D-xylulose + NADH + H(+). It participates in carbohydrate degradation; L-arabinose degradation via L-arabinitol; D-xylulose 5-phosphate from L-arabinose (fungal route): step 4/5. Xylitol dehydrogenase which catalyzes the conversion of xylitol to D-xylulose. Xylose is a major component of hemicelluloses such as xylan. Most fungi utilize D-xylose via three enzymatic reactions, xylose reductase (XR), xylitol dehydrogenase (XDH), and xylulokinase, to form xylulose 5-phosphate, which enters pentose phosphate pathway. This is D-xylulose reductase A (xdhA) from Aspergillus oryzae (strain ATCC 42149 / RIB 40) (Yellow koji mold).